The following is a 283-amino-acid chain: Malonyl-[acyl-carrier protein] O-methyltransferase (283 aa).

It belongs to the methyltransferase superfamily.

It catalyses the reaction malonyl-[ACP] + S-adenosyl-L-methionine = malonyl-[ACP] methyl ester + S-adenosyl-L-homocysteine. The protein operates within cofactor biosynthesis; biotin biosynthesis. In terms of biological role, converts the free carboxyl group of a malonyl-thioester to its methyl ester by transfer of a methyl group from S-adenosyl-L-methionine (SAM). It allows to synthesize pimeloyl-ACP via the fatty acid synthetic pathway. This chain is Malonyl-[acyl-carrier protein] O-methyltransferase, found in Acetivibrio thermocellus (strain ATCC 27405 / DSM 1237 / JCM 9322 / NBRC 103400 / NCIMB 10682 / NRRL B-4536 / VPI 7372) (Clostridium thermocellum).